The chain runs to 238 residues: MGRKWANIVAKKTAKDGATSKVYAKFGVEIYAAAKQGEPDPESNSALKFVIERAKQAQVPKHVIDKAIDKAKGGGDETFVQGRYEGFGPNGSMVIAETLTSNVNRTIANIRTIFNKKGGNIGAAGAVSYMFDNTGVIVFKGTDPDHIFEILLDAEVDVRDVTEEEGNIVIYTEATDLHKGIAALKAAGITEFSTTELEMIAQSDVELSPEDLEIFEGLVDALEDDDDVQKVYHNVANL.

It belongs to the TACO1 family. YeeN subfamily.

Its subcellular location is the cytoplasm. The sequence is that of Probable transcriptional regulatory protein YeeN from Salmonella typhi.